The primary structure comprises 80 residues: Defensin-like protein 46 (80 aa).

An N-terminal signal peptide occupies residues 1–27 (MGSTKTLVTCFLTIILAVSLSNHNVLA). 4 disulfide bridges follow: C40/C78, C44/C65, C50/C76, and C54/C77.

The protein belongs to the DEFL family.

Its subcellular location is the secreted. In Arabidopsis thaliana (Mouse-ear cress), this protein is Defensin-like protein 46.